A 612-amino-acid chain; its full sequence is Alpha-glycerophosphate oxidase (612 aa).

21–49 serves as a coordination point for FAD; the sequence is DLLIIGGGITGAGVALQAAASGLDTGLIE. Residues 399 to 408 are compositionally biased toward basic and acidic residues; the sequence is ETSTSEKELD. The segment at 399-418 is disordered; that stretch reads ETSTSEKELDPSAVSRGSSF.

The protein belongs to the FAD-dependent glycerol-3-phosphate dehydrogenase family. FAD serves as cofactor.

It is found in the cytoplasm. It catalyses the reaction sn-glycerol 3-phosphate + O2 = dihydroxyacetone phosphate + H2O2. The chain is Alpha-glycerophosphate oxidase (glpO) from Streptococcus pyogenes serotype M6 (strain ATCC BAA-946 / MGAS10394).